The following is a 637-amino-acid chain: 1-deoxy-D-xylulose-5-phosphate synthase (637 aa).

Thiamine diphosphate contacts are provided by residues His-71 and Ser-112 to Ala-114. Asp-144 contributes to the Mg(2+) binding site. Thiamine diphosphate contacts are provided by residues Gly-145–Ala-146, Asn-173, Tyr-284, and Glu-365. Asn-173 contacts Mg(2+).

It belongs to the transketolase family. DXPS subfamily. In terms of assembly, homodimer. Mg(2+) is required as a cofactor. Thiamine diphosphate serves as cofactor.

The catalysed reaction is D-glyceraldehyde 3-phosphate + pyruvate + H(+) = 1-deoxy-D-xylulose 5-phosphate + CO2. Its pathway is metabolic intermediate biosynthesis; 1-deoxy-D-xylulose 5-phosphate biosynthesis; 1-deoxy-D-xylulose 5-phosphate from D-glyceraldehyde 3-phosphate and pyruvate: step 1/1. Its function is as follows. Catalyzes the acyloin condensation reaction between C atoms 2 and 3 of pyruvate and glyceraldehyde 3-phosphate to yield 1-deoxy-D-xylulose-5-phosphate (DXP). The protein is 1-deoxy-D-xylulose-5-phosphate synthase of Mycolicibacterium gilvum (strain PYR-GCK) (Mycobacterium gilvum (strain PYR-GCK)).